The following is a 244-amino-acid chain: Protein pendolino (244 aa).

In terms of domain architecture, UBC core spans 20 to 176 (QQEYKILAEY…VQENIKESKE (157 aa)).

It belongs to the ubiquitin-conjugating enzyme family. FTS subfamily. In terms of assembly, interacts (via N-terminus) with cav/HOAP (via N-terminus); the interaction is direct. Probably interacts (via N-terminus and UBC domain) with ver and moi.

Its subcellular location is the nucleus. The protein localises to the nucleolus. It localises to the chromosome. In terms of biological role, required for efficient DNA replication, probably through involvement in telomere replication. May have a role in telomere capping of heterochromatic chromosome ends. The polypeptide is Protein pendolino (Drosophila melanogaster (Fruit fly)).